The following is a 613-amino-acid chain: Dihydroxy-acid dehydratase (613 aa).

Position 81 (Asp-81) interacts with Mg(2+). Cys-122 contributes to the [2Fe-2S] cluster binding site. Mg(2+) is bound by residues Asp-123 and Lys-124. The residue at position 124 (Lys-124) is an N6-carboxylysine. Residue Cys-195 participates in [2Fe-2S] cluster binding. Glu-491 is a binding site for Mg(2+). Ser-517 acts as the Proton acceptor in catalysis.

The protein belongs to the IlvD/Edd family. In terms of assembly, homodimer. [2Fe-2S] cluster serves as cofactor. It depends on Mg(2+) as a cofactor.

It carries out the reaction (2R)-2,3-dihydroxy-3-methylbutanoate = 3-methyl-2-oxobutanoate + H2O. The enzyme catalyses (2R,3R)-2,3-dihydroxy-3-methylpentanoate = (S)-3-methyl-2-oxopentanoate + H2O. Its pathway is amino-acid biosynthesis; L-isoleucine biosynthesis; L-isoleucine from 2-oxobutanoate: step 3/4. It functions in the pathway amino-acid biosynthesis; L-valine biosynthesis; L-valine from pyruvate: step 3/4. Its function is as follows. Functions in the biosynthesis of branched-chain amino acids. Catalyzes the dehydration of (2R,3R)-2,3-dihydroxy-3-methylpentanoate (2,3-dihydroxy-3-methylvalerate) into 2-oxo-3-methylpentanoate (2-oxo-3-methylvalerate) and of (2R)-2,3-dihydroxy-3-methylbutanoate (2,3-dihydroxyisovalerate) into 2-oxo-3-methylbutanoate (2-oxoisovalerate), the penultimate precursor to L-isoleucine and L-valine, respectively. The protein is Dihydroxy-acid dehydratase of Vibrio cholerae serotype O1 (strain ATCC 39541 / Classical Ogawa 395 / O395).